A 320-amino-acid chain; its full sequence is NAD kinase (320 aa).

Asp96 acts as the Proton acceptor in catalysis. Residues 96–97 (DG), Arg101, 170–171 (NE), Asp200, and 211–216 (TAYAFS) each bind NAD(+).

This sequence belongs to the NAD kinase family. Requires a divalent metal cation as cofactor.

It localises to the cytoplasm. The catalysed reaction is NAD(+) + ATP = ADP + NADP(+) + H(+). Its function is as follows. Involved in the regulation of the intracellular balance of NAD and NADP, and is a key enzyme in the biosynthesis of NADP. Catalyzes specifically the phosphorylation on 2'-hydroxyl of the adenosine moiety of NAD to yield NADP. This is NAD kinase from Rhodococcus opacus (strain B4).